Reading from the N-terminus, the 37-residue chain is Large ribosomal subunit protein bL36 (37 aa).

This sequence belongs to the bacterial ribosomal protein bL36 family.

The polypeptide is Large ribosomal subunit protein bL36 (Shewanella woodyi (strain ATCC 51908 / MS32)).